We begin with the raw amino-acid sequence, 211 residues long: Glycerol-3-phosphate acyltransferase (211 aa).

Transmembrane regions (helical) follow at residues 10 to 30 (FTTW…FGLL), 63 to 83 (ALTL…IKFL), 90 to 110 (NIFI…PVWL), 126 to 146 (LGLY…LFLI), and 152 to 172 (LSAL…YPYL).

Belongs to the PlsY family. In terms of assembly, probably interacts with PlsX.

The protein localises to the cell inner membrane. The enzyme catalyses an acyl phosphate + sn-glycerol 3-phosphate = a 1-acyl-sn-glycero-3-phosphate + phosphate. The protein operates within lipid metabolism; phospholipid metabolism. In terms of biological role, catalyzes the transfer of an acyl group from acyl-phosphate (acyl-PO(4)) to glycerol-3-phosphate (G3P) to form lysophosphatidic acid (LPA). This enzyme utilizes acyl-phosphate as fatty acyl donor, but not acyl-CoA or acyl-ACP. In Bartonella henselae (strain ATCC 49882 / DSM 28221 / CCUG 30454 / Houston 1) (Rochalimaea henselae), this protein is Glycerol-3-phosphate acyltransferase.